A 304-amino-acid chain; its full sequence is Methionyl-tRNA formyltransferase (304 aa).

109 to 112 contributes to the (6S)-5,6,7,8-tetrahydrofolate binding site; it reads SDLP.

The protein belongs to the Fmt family.

The enzyme catalyses L-methionyl-tRNA(fMet) + (6R)-10-formyltetrahydrofolate = N-formyl-L-methionyl-tRNA(fMet) + (6S)-5,6,7,8-tetrahydrofolate + H(+). In terms of biological role, attaches a formyl group to the free amino group of methionyl-tRNA(fMet). The formyl group appears to play a dual role in the initiator identity of N-formylmethionyl-tRNA by promoting its recognition by IF2 and preventing the misappropriation of this tRNA by the elongation apparatus. This Rickettsia bellii (strain RML369-C) protein is Methionyl-tRNA formyltransferase.